The sequence spans 180 residues: 3-hydroxyanthranilate 3,4-dioxygenase (180 aa).

R44 is a binding site for O2. Fe cation contacts are provided by H48, E54, and H92. E54 lines the substrate pocket. 2 residues coordinate substrate: R96 and E106. The a divalent metal cation site is built by C121, C124, C158, and C161.

The protein belongs to the 3-HAO family. Requires Fe(2+) as cofactor.

It localises to the cytoplasm. The enzyme catalyses 3-hydroxyanthranilate + O2 = (2Z,4Z)-2-amino-3-carboxymuconate 6-semialdehyde. It participates in cofactor biosynthesis; NAD(+) biosynthesis; quinolinate from L-kynurenine: step 3/3. Functionally, catalyzes the oxidative ring opening of 3-hydroxyanthranilate to 2-amino-3-carboxymuconate semialdehyde, which spontaneously cyclizes to quinolinate. This chain is 3-hydroxyanthranilate 3,4-dioxygenase (bna1), found in Neurospora crassa (strain ATCC 24698 / 74-OR23-1A / CBS 708.71 / DSM 1257 / FGSC 987).